The primary structure comprises 452 residues: FAD-linked oxidoreductase DDB_G0289697 (452 aa).

The 169-residue stretch at V44–V212 folds into the FAD-binding PCMH-type domain. The residue at position 81 (H81) is a Pros-8alpha-FAD histidine.

This sequence belongs to the oxygen-dependent FAD-linked oxidoreductase family. It depends on FAD as a cofactor.

The polypeptide is FAD-linked oxidoreductase DDB_G0289697 (Dictyostelium discoideum (Social amoeba)).